The sequence spans 186 residues: ATP synthase subunit b (186 aa).

The helical transmembrane segment at Leu-5–His-25 threads the bilayer.

The protein belongs to the ATPase B chain family. F-type ATPases have 2 components, F(1) - the catalytic core - and F(0) - the membrane proton channel. F(1) has five subunits: alpha(3), beta(3), gamma(1), delta(1), epsilon(1). F(0) has three main subunits: a(1), b(2) and c(10-14). The alpha and beta chains form an alternating ring which encloses part of the gamma chain. F(1) is attached to F(0) by a central stalk formed by the gamma and epsilon chains, while a peripheral stalk is formed by the delta and b chains.

The protein localises to the cell inner membrane. Functionally, f(1)F(0) ATP synthase produces ATP from ADP in the presence of a proton or sodium gradient. F-type ATPases consist of two structural domains, F(1) containing the extramembraneous catalytic core and F(0) containing the membrane proton channel, linked together by a central stalk and a peripheral stalk. During catalysis, ATP synthesis in the catalytic domain of F(1) is coupled via a rotary mechanism of the central stalk subunits to proton translocation. In terms of biological role, component of the F(0) channel, it forms part of the peripheral stalk, linking F(1) to F(0). This chain is ATP synthase subunit b, found in Bdellovibrio bacteriovorus (strain ATCC 15356 / DSM 50701 / NCIMB 9529 / HD100).